The sequence spans 139 residues: Protein PsiE homolog (139 aa).

4 helical membrane passes run 20 to 40 (IVLC…LVKI), 60 to 80 (AEQA…VQYF), 85 to 105 (HFPL…LIIV), and 111 to 131 (VDTI…CLVL).

Belongs to the PsiE family.

The protein localises to the cell inner membrane. The chain is Protein PsiE homolog from Haemophilus influenzae (strain 86-028NP).